Consider the following 344-residue polypeptide: Ribosomal RNA large subunit methyltransferase Cfr (344 aa).

The active-site Proton acceptor is Glu-88. One can recognise a Radical SAM core domain in the interval 95 to 324 (KKGWESFCIS…HANGISVATR (230 aa)). A disulfide bridge links Cys-102 with Cys-335. [4Fe-4S] cluster contacts are provided by Cys-109, Cys-113, and Cys-116. Residues 155–156 (GE), Ser-186, 209–211 (SLH), and Asn-290 each bind S-adenosyl-L-methionine. Residue Cys-335 is the S-methylcysteine intermediate of the active site.

Belongs to the radical SAM superfamily. RlmN family. Cfr subfamily. [4Fe-4S] cluster serves as cofactor.

The protein localises to the cytoplasm. It carries out the reaction adenosine(2503) in 23S rRNA + 2 reduced [2Fe-2S]-[ferredoxin] + 2 S-adenosyl-L-methionine = 8-methyladenosine(2503) in 23S rRNA + 5'-deoxyadenosine + L-methionine + 2 oxidized [2Fe-2S]-[ferredoxin] + S-adenosyl-L-homocysteine. Its function is as follows. Specifically methylates position 8 of adenine 2503 in 23S rRNA. Confers resistance to some classes of antibiotics. The sequence is that of Ribosomal RNA large subunit methyltransferase Cfr from Lachnoclostridium phytofermentans (strain ATCC 700394 / DSM 18823 / ISDg) (Clostridium phytofermentans).